Reading from the N-terminus, the 162-residue chain is Small ribosomal subunit protein uS9 (162 aa).

The protein belongs to the universal ribosomal protein uS9 family.

The polypeptide is Small ribosomal subunit protein uS9 (Parvibaculum lavamentivorans (strain DS-1 / DSM 13023 / NCIMB 13966)).